Reading from the N-terminus, the 457-residue chain is tRNA-2-methylthio-N(6)-dimethylallyladenosine synthase (457 aa).

In terms of domain architecture, MTTase N-terminal spans 19-134 (RKLFIETYGC…LPNLVGAVEH (116 aa)). [4Fe-4S] cluster is bound by residues cysteine 28, cysteine 64, cysteine 98, cysteine 172, cysteine 176, and cysteine 179. Residues 158–390 (PGVHISGFVS…IDLQNKLSEE (233 aa)) enclose the Radical SAM core domain. The 64-residue stretch at 393-456 (LRDIGKTFEV…SATLFGEPVE (64 aa)) folds into the TRAM domain.

This sequence belongs to the methylthiotransferase family. MiaB subfamily. Monomer. [4Fe-4S] cluster is required as a cofactor.

The protein localises to the cytoplasm. The catalysed reaction is N(6)-dimethylallyladenosine(37) in tRNA + (sulfur carrier)-SH + AH2 + 2 S-adenosyl-L-methionine = 2-methylsulfanyl-N(6)-dimethylallyladenosine(37) in tRNA + (sulfur carrier)-H + 5'-deoxyadenosine + L-methionine + A + S-adenosyl-L-homocysteine + 2 H(+). In terms of biological role, catalyzes the methylthiolation of N6-(dimethylallyl)adenosine (i(6)A), leading to the formation of 2-methylthio-N6-(dimethylallyl)adenosine (ms(2)i(6)A) at position 37 in tRNAs that read codons beginning with uridine. The protein is tRNA-2-methylthio-N(6)-dimethylallyladenosine synthase of Parabacteroides distasonis (strain ATCC 8503 / DSM 20701 / CIP 104284 / JCM 5825 / NCTC 11152).